A 732-amino-acid chain; its full sequence is E3 ubiquitin-protein ligase hel2 (732 aa).

The disordered stretch occupies residues 1 to 48 (MSPSGPNLNNKEHNRASEKKNSRTHNKKTNRNQSKEKPVSSRSVETPK). Over residues 10–21 (NKEHNRASEKKN) the composition is skewed to basic and acidic residues. Residues 81–121 (CFICAEGITYSCVLPCNHRMCHVCALRLRALYKTKECTFCK) form an RING-type zinc finger. The LIM zinc-binding domain occupies 245 to 315 (PKCEFCNTHF…RECLERKFVV (71 aa)). Disordered stretches follow at residues 345-380 (IIPQFSYDPPGASGRNRRERTSSTPSEQSTSVNETA), 411-501 (DFGF…QHQQ), and 623-732 (HDGP…FHIG). Composition is skewed to polar residues over residues 366-380 (SSTPSEQSTSVNETA) and 415-433 (TLSNPAPTSARPATSTRTI). Low complexity predominate over residues 457–468 (SSSAPSVPVSAP). The residue at position 482 (Ser482) is a Phosphoserine. Polar residues-rich tracts occupy residues 490–501 (PMASSEQAQHQQ) and 629–654 (SAPSSSINLANITSRPTNSSAANTPS). Residues 701–713 (STPNTSSNRNSNT) show a composition bias toward low complexity.

This sequence belongs to the ZNF598/HEL2 family.

It localises to the cytoplasm. It catalyses the reaction S-ubiquitinyl-[E2 ubiquitin-conjugating enzyme]-L-cysteine + [acceptor protein]-L-lysine = [E2 ubiquitin-conjugating enzyme]-L-cysteine + N(6)-ubiquitinyl-[acceptor protein]-L-lysine.. It functions in the pathway protein modification; protein ubiquitination. Functionally, E3 ubiquitin-protein ligase that plays a key role in the ribosome quality control (RQC), a pathway that takes place when a ribosome has stalled during translation, leading to degradation of nascent peptide chains. Activated when ribosomes are stalled within an mRNA following translation of prematurely polyadenylated mRNAs. Acts as a ribosome collision sensor: specifically recognizes and binds collided ribosome and ubiquitinates the 40S ribosomal proteins rps20/uS10 and rps3/uS3. Catalyzes 'Lys-63'-linked polyubiquitination of rps20/uS10, promoting recruitment of the RQT (ribosome quality control trigger) complex, which drives the disassembly of stalled ribosomes, followed by degradation of nascent peptides. In Schizosaccharomyces pombe (strain 972 / ATCC 24843) (Fission yeast), this protein is E3 ubiquitin-protein ligase hel2.